Here is a 122-residue protein sequence, read N- to C-terminus: Large ribosomal subunit protein bL12 (122 aa).

This sequence belongs to the bacterial ribosomal protein bL12 family. Homodimer. Part of the ribosomal stalk of the 50S ribosomal subunit. Forms a multimeric L10(L12)X complex, where L10 forms an elongated spine to which 2 to 4 L12 dimers bind in a sequential fashion. Binds GTP-bound translation factors.

Its function is as follows. Forms part of the ribosomal stalk which helps the ribosome interact with GTP-bound translation factors. Is thus essential for accurate translation. This chain is Large ribosomal subunit protein bL12, found in Cronobacter sakazakii (strain ATCC BAA-894) (Enterobacter sakazakii).